The following is a 474-amino-acid chain: Lipoprotein lipase (474 aa).

The first 27 residues, 1–27 (MESKALLLVVLGVWLQSLTAFRGGVAA), serve as a signal peptide directing secretion. An interaction with GPIHBP1 region spans residues 32-53 (RDFSDIESKFALRTPEDTAEDT). Cysteine 54 and cysteine 67 are joined by a disulfide. Asparagine 70 carries an N-linked (GlcNAc...) asparagine glycan. Tyrosine 121 carries the post-translational modification 3'-nitrotyrosine. Serine 159 (nucleophile) is an active-site residue. Aspartate 183 acts as the Charge relay system in catalysis. Tyrosine 191 is subject to 3'-nitrotyrosine. Ca(2+) is bound by residues alanine 194, arginine 197, serine 199, and aspartate 202. The cysteines at positions 243 and 266 are disulfide-linked. The segment at 243–266 (CNIGEAIRVIAERGLGDVDQLVKC) is essential for determining substrate specificity. Catalysis depends on histidine 268, which acts as the Charge relay system. 2 disulfide bridges follow: cysteine 291-cysteine 310 and cysteine 302-cysteine 305. A PLAT domain is found at 341–464 (FHYQVKIHFS…KGKDSAVFVK (124 aa)). Tyrosine 343 carries the 3'-nitrotyrosine modification. N-linked (GlcNAc...) asparagine glycosylation occurs at asparagine 386. Residues 417 to 421 (WPDWW) are important for interaction with lipoprotein particles. Residues 430–434 (RIRVK) form an important for heparin binding region. Residues 443 to 467 (IFCAREKVSHLQKGKDSAVFVKCHD) form an interaction with GPIHBP1 region. A disulfide bridge links cysteine 445 with cysteine 465.

It belongs to the AB hydrolase superfamily. Lipase family. Homodimer. Interacts with GPIHBP1 with 1:1 stoichiometry. Interacts with APOC2; the interaction activates LPL activity in the presence of lipids. Interaction with heparan sulfate proteoglycans is required to protect LPL against loss of activity. Associates with lipoprotein particles in blood plasma. Interacts with LMF1 and SEL1L; interaction with SEL1L is required to prevent aggregation of newly synthesized LPL in the endoplasmic reticulum (ER), and for normal export of LPL from the ER to the extracellular space. Interacts with SORL1; SORL1 acts as a sorting receptor, promoting LPL localization to endosomes and later to lysosomes, leading to degradation of newly synthesized LPL. Tyrosine nitration after lipopolysaccharide (LPS) challenge down-regulates the lipase activity. Post-translationally, N-glycosylated. Detected in white and brown adipose tissue and heart muscle, especially at the lumenal surface of capillaries. Detected on capillary endothelium in the lactating mammary gland. Detected in blood plasma (at protein level). Expressed in liver, epididymal fat, heart, psoas muscle, lactating mammary gland, adrenal, lung, and ovary. Highest levels in heart and adrenal gland.

It localises to the cell membrane. Its subcellular location is the secreted. The protein localises to the extracellular space. The protein resides in the extracellular matrix. The enzyme catalyses a triacylglycerol + H2O = a diacylglycerol + a fatty acid + H(+). The catalysed reaction is a 1,2-diacyl-sn-glycero-3-phosphocholine + H2O = a 2-acyl-sn-glycero-3-phosphocholine + a fatty acid + H(+). It catalyses the reaction 1,2,3-tri-(9Z-octadecenoyl)-glycerol + H2O = di-(9Z)-octadecenoylglycerol + (9Z)-octadecenoate + H(+). It carries out the reaction 1,2-di-(9Z-octadecenoyl)-sn-glycero-3-phosphocholine + H2O = (9Z-octadecenoyl)-sn-glycero-3-phosphocholine + (9Z)-octadecenoate + H(+). The enzyme catalyses 1,2,3-tributanoylglycerol + H2O = dibutanoylglycerol + butanoate + H(+). The catalysed reaction is 1,2-dihexadecanoyl-sn-glycero-3-phosphocholine + H2O = hexadecanoyl-sn-glycero-3-phosphocholine + hexadecanoate + H(+). Its activity is regulated as follows. The apolipoprotein APOC2 acts as a coactivator of LPL activity. Ca(2+) binding promotes protein stability and formation of the active homodimer. Interaction with GPIHBP1 protects LPL against inactivation by ANGPTL4. Key enzyme in triglyceride metabolism. Catalyzes the hydrolysis of triglycerides from circulating chylomicrons and very low density lipoproteins (VLDL), and thereby plays an important role in lipid clearance from the blood stream, lipid utilization and storage. Although it has both phospholipase and triglyceride lipase activities it is primarily a triglyceride lipase with low but detectable phospholipase activity. Mediates margination of triglyceride-rich lipoprotein particles in capillaries. Recruited to its site of action on vascular endothelium by binding to GPIHBP1 and cell surface heparan sulfate proteoglycans. In Mus musculus (Mouse), this protein is Lipoprotein lipase (Lpl).